Consider the following 1005-residue polypeptide: Vacuolar membrane protease (1005 aa).

Residues 1 to 14 (MAKETTARSILGYQ) are Cytoplasmic-facing. A helical membrane pass occupies residues 15–35 (TLPTTALIALIYVVAFFSVLV). The Vacuolar portion of the chain corresponds to 36 to 353 (SDQLPSIPHP…PEDSAKQKSK (318 aa)). N-linked (GlcNAc...) asparagine glycosylation is present at N107. Residues H152 and D164 each contribute to the Zn(2+) site. E196 functions as the Proton acceptor in the catalytic mechanism. E197 lines the Zn(2+) pocket. The N-linked (GlcNAc...) asparagine glycan is linked to N213. Residues E222 and H311 each coordinate Zn(2+). The chain crosses the membrane as a helical span at residues 354–374 (PGVYFDRPVVLALLWAIGAVL). The Cytoplasmic segment spans residues 375-448 (KHNAGSPPPP…LITVWKQASF (74 aa)). A disordered region spans residues 379-420 (GSPPPPPKPTVPHSANNASAGTGRPGASTRQPTRSFGSNEDA). The segment covering 406–419 (STRQPTRSFGSNED) has biased composition (polar residues). A helical membrane pass occupies residues 449–469 (WIALIVTVGLQALLAWGYVAI). At 470-479 (NPFTIYSRPY) the chain is on the vacuolar side. A helical membrane pass occupies residues 480 to 500 (FVLLSFFALSFFSMTLVLQAA). The Cytoplasmic segment spans residues 501–519 (FPSSPVKHAIEVREQEKTT). The chain crosses the membrane as a helical span at residues 520–540 (ILLHLHLLSWIALLLSTILIG). The Vacuolar portion of the chain corresponds to 541–543 (KSQ). A helical membrane pass occupies residues 544-564 (VGSFYVVTVWYLGIWAATVIG). Residues 565–644 (TLQPILVSKR…RKTNSKSKED (80 aa)) lie on the Cytoplasmic side of the membrane. A disordered region spans residues 577 to 640 (DKGKRRARRS…ASNRRKTNSK (64 aa)). The span at 588–606 (SASTSSSSSSSSSSSSGSD) shows a compositional bias: low complexity. The helical transmembrane segment at 645–665 (GAIGWWIAQVLLTVPPVVMLV) threads the bilayer. Residues 666-686 (GQITSIVLEAMNQTLTDGNSA) lie on the Vacuolar side of the membrane. N-linked (GlcNAc...) asparagine glycosylation occurs at N677. A helical transmembrane segment spans residues 687 to 707 (WSIYLLTALLATMLVLPVAPF). The Cytoplasmic segment spans residues 708–713 (SPKLHR). A helical transmembrane segment spans residues 714 to 734 (GLIFLSAAVFVGFTIYLWVVF). Residues 735-1005 (PFTRQDPFKV…VEASAPFTVV (271 aa)) are Vacuolar-facing. N-linked (GlcNAc...) asparagine glycosylation is found at N761 and N961.

Belongs to the peptidase M28 family. It depends on Zn(2+) as a cofactor.

It is found in the vacuole membrane. Its function is as follows. May be involved in vacuolar sorting and osmoregulation. This chain is Vacuolar membrane protease, found in Coprinopsis cinerea (strain Okayama-7 / 130 / ATCC MYA-4618 / FGSC 9003) (Inky cap fungus).